The following is a 585-amino-acid chain: Organic cation transporter 1 (585 aa).

Topologically, residues 1–40 (MSFQAMETFAEISQEILMSATKPPDFDFVLEQVGNYGTYQ) are cytoplasmic. Residues 41 to 61 (IVFFFIICLPTSLPSAFSAFN) traverse the membrane as a helical segment. The Extracellular segment spans residues 62 to 155 (IPFVVGNPPH…LVCDQQAWIE (94 aa)). N-linked (GlcNAc...) asparagine glycans are attached at residues Asn-87, Asn-98, and Asn-133. Residues 156 to 176 (ISTTSFYVGSFIGNCLFGYVA) form a helical membrane-spanning segment. The Cytoplasmic portion of the chain corresponds to 177–184 (DKFGRRRS). The helical transmembrane segment at 185-205 (FFVILTVLIVCGTASSFAKDI) threads the bilayer. Topologically, residues 206–212 (ESFIILR) are extracellular. A helical transmembrane segment spans residues 213–233 (FFTGLAFPALFQIPFIICMEF). The Cytoplasmic portion of the chain corresponds to 234–243 (MGNSGRIFSG). Residues 244 to 264 (LMTSLFFGAAMALLGVVAMFI) traverse the membrane as a helical segment. The Extracellular segment spans residues 265-269 (RRWRQ). The chain crosses the membrane as a helical span at residues 270–290 (LTFFCNAPFAFYIIYYFFLPE). Topologically, residues 291–360 (SPRWSVSVGK…FKTPNLRRKT (70 aa)) are cytoplasmic. The chain crosses the membrane as a helical span at residues 361-381 (LIVTYIWVMNAIIYNGLTLNV). Over 382–389 (SNLPVDDY) the chain is Extracellular. The chain crosses the membrane as a helical span at residues 390-410 (WSFIINGAVELPGYFVVWPLL). Over 411-416 (QCAGRR) the chain is Cytoplasmic. The chain crosses the membrane as a helical span at residues 417-437 (WTLAATMIVCGIGCVSAMFMP). The Extracellular segment spans residues 438–446 (DGYPWLVAS). Residues 447–467 (ASFIGKFGVGSGFAVIYIFAG) traverse the membrane as a helical segment. Residues 468 to 476 (ELYPTVVRA) are Cytoplasmic-facing. Residues 477–497 (IGMGMSSMVAGSGLLLAPHIV) traverse the membrane as a helical segment. Residues 498-504 (NLGKIVK) lie on the Extracellular side of the membrane. The chain crosses the membrane as a helical span at residues 505–525 (ILPLLIMGLMALSAGILTFFL). The Cytoplasmic portion of the chain corresponds to 526–585 (PETLGAPLPMTIEDAENFGKKPEPDSGMFTQAAKKRESQPLLEPHTPMDRRRRSSRLMNI). Residues 544–585 (GKKPEPDSGMFTQAAKKRESQPLLEPHTPMDRRRRSSRLMNI) are disordered. The segment covering 575 to 585 (RRRRSSRLMNI) has biased composition (basic residues).

This sequence belongs to the major facilitator (TC 2.A.1) superfamily. Organic cation transporter (TC 2.A.1.19) family.

The protein localises to the membrane. Functionally, transports organic cations such as tetraethylammonium (TEA). Displays a broad substrate specificity. The sequence is that of Organic cation transporter 1 (oct-1) from Caenorhabditis elegans.